A 528-amino-acid polypeptide reads, in one-letter code: MSTLAEHVRDTPPAAERPRTYEVRTYGCQMNVHDSERLTGSLEAAGYVSAEGAEADIVVINTCAVRENADNKLYGNLGHLAGVKRRHEGMQIAVGGCLAQKDRATVLEKAPWVDVVFGTHNMGALPTLLERARHNGEAQLEILESLETFPSTLPTKRDEIASGWVSISVGCNNTCTFCIVPALRGKEKDRRPGDILAEIQALVDDGAVEVTLLGQNVNSYGVEFGDRQAFGKLLRAAGAIEGLERIRFTSPHPAAFTDDVIDAMAETPAVMPQLHMPLQSGSDRVLKAMRRSYRSERFLGILDRVRTRIPDAAITTDIIVGFPGETEEDFQETLRVVEAARFSSAFTFQYSIRPGTPAATMEEQVPADVVKERYGRLTALQERISHEENQRVVGRTVEVLVSAHEGRKDGDTRRVTGRAQDGRLVHLDVPAGSGEPRPGDAVEVEITRAAPFHLIADSVDQAPLRIRRTRAGDAWERAQADSCGVPAPAAGTSAGGPPRVSLGLPSLRASTIASAGAVDGSAHPRHRA.

The MTTase N-terminal domain occupies 19–134 (RTYEVRTYGC…LPTLLERARH (116 aa)). [4Fe-4S] cluster is bound by residues Cys28, Cys63, Cys97, Cys171, Cys175, and Cys178. In terms of domain architecture, Radical SAM core spans 157–387 (RDEIASGWVS…TALQERISHE (231 aa)). Residues 390–460 (QRVVGRTVEV…PFHLIADSVD (71 aa)) enclose the TRAM domain.

The protein belongs to the methylthiotransferase family. MiaB subfamily. Monomer. It depends on [4Fe-4S] cluster as a cofactor.

It is found in the cytoplasm. The enzyme catalyses N(6)-dimethylallyladenosine(37) in tRNA + (sulfur carrier)-SH + AH2 + 2 S-adenosyl-L-methionine = 2-methylsulfanyl-N(6)-dimethylallyladenosine(37) in tRNA + (sulfur carrier)-H + 5'-deoxyadenosine + L-methionine + A + S-adenosyl-L-homocysteine + 2 H(+). In terms of biological role, catalyzes the methylthiolation of N6-(dimethylallyl)adenosine (i(6)A), leading to the formation of 2-methylthio-N6-(dimethylallyl)adenosine (ms(2)i(6)A) at position 37 in tRNAs that read codons beginning with uridine. The sequence is that of tRNA-2-methylthio-N(6)-dimethylallyladenosine synthase from Clavibacter michiganensis subsp. michiganensis (strain NCPPB 382).